The primary structure comprises 610 residues: MAHENYLYQMRDIKFAVKEWLDMNKLLSCDAYKDYYGIDDIDAFLDVNFKVCRDVLCPANKEADDPGCKFVGGDTQAVITPEVFKNAYNTVCEAGLGPQFSDRSAEGRMPLVWEAPILEMQSGASPSIVMFWCLTAGACTVIQHNASEELKERFLPKMYSGEWGGTMGLTEPGAGSEVGAVATKCFPTDTPGLYKIKGQKCFITSGDHDLASNIIHLVLAKTPDAKPGTSGINCLIVPKFWVNEDGTQGAWNDVTSTGIEHKMGIHGSSTLSLSFGENDNCYGWMIGDGPVDGRGKGMAQMFQMMNEERLNTGTFAQGCIGSAYYAALDYCKMRVQSPKFTDPKGPSVRIIEHEDVRRMLLFQKSIMEACRALLYTTYFYQDLSHDAADPAEREYYDDMTMIQIPLCKAYVSDMAWISTEQAIQCLGGYGFIEEYAPAELARDCKIYSLWEGTNFIQAQDFNNRKTTMKKGEPMKKWVAQIADFLATKKDPAFADEFAMMDDAFSAYNEILSTKEAWRASNPQLVQLFATRMLHAASMMICGKLMLDQALLAAKKLAELGEDHFDAMFYKGKIATARFYVMNVVPGVFGTLKAMKVADTSAIDMPEEAFM.

Glutamate 451 acts as the Proton acceptor in catalysis.

Belongs to the acyl-CoA dehydrogenase family. FAD serves as cofactor.

It localises to the cytoplasm. The catalysed reaction is butanoyl-CoA + oxidized [electron-transfer flavoprotein] + H(+) = (2E)-butenoyl-CoA + reduced [electron-transfer flavoprotein]. The enzyme catalyses a short-chain 2,3-saturated fatty acyl-CoA + oxidized [electron-transfer flavoprotein] + H(+) = a short-chain (2E)-enoyl-CoA + reduced [electron-transfer flavoprotein]. The protein operates within lipid metabolism; butanoate metabolism. Involved in syntrophic growth of S.wolfei with butyrate, as part of the butyrate oxidation pathway. Catalyzes the oxidation of butanoyl-CoA to crotonyl-CoA. Probably passes the electrons released by this reaction on to electron-transfer flavoproteins (EtfAB) to finally generate hydrogen and/or formate. This is Butyryl-CoA dehydrogenase Swol_1933 from Syntrophomonas wolfei subsp. wolfei (strain DSM 2245B / Goettingen).